Here is a 263-residue protein sequence, read N- to C-terminus: uncharacterized protein (263 aa).

Positions 44 to 131 constitute a GST N-terminal domain; the sequence is QVYSLGTPNG…YLADKFNHLI (88 aa). Positions 134–263 constitute a GST C-terminal domain; sequence DWAQRTEVLN…ALEVDYKAIK (130 aa).

It belongs to the GST superfamily. As to quaternary structure, homodimer.

This is an uncharacterized protein from Streptococcus mutans serotype c (strain ATCC 700610 / UA159).